A 2839-amino-acid chain; its full sequence is Bifunctional DNA-directed RNA polymerase subunit beta-beta' (2839 aa).

The DNA-directed RNA polymerase subunit beta stretch occupies residues 1–1433 (MVDSSYMCAS…CLNVALKQNN (1433 aa)). Positions 1436–2839 (IEDISHTNIA…KESVAESRYN (1404 aa)) are DNA-directed RNA polymerase subunit beta'. Zn(2+) is bound by residues C1501, C1503, C1516, and C1519. Positions 1893, 1895, and 1897 each coordinate Mg(2+). Residues C2238, C2312, C2319, and C2322 each contribute to the Zn(2+) site.

The protein in the N-terminal section; belongs to the RNA polymerase beta chain family. This sequence in the C-terminal section; belongs to the RNA polymerase beta' chain family. The RNAP catalytic core consists of 2 alpha, 1 beta/beta' and 1 omega subunit. When a sigma factor is associated with the core the holoenzyme is formed, which can initiate transcription. Requires Mg(2+) as cofactor. It depends on Zn(2+) as a cofactor.

The catalysed reaction is RNA(n) + a ribonucleoside 5'-triphosphate = RNA(n+1) + diphosphate. DNA-dependent RNA polymerase catalyzes the transcription of DNA into RNA using the four ribonucleoside triphosphates as substrates. The chain is Bifunctional DNA-directed RNA polymerase subunit beta-beta' (rpoBC) from Wolbachia sp. subsp. Brugia malayi (strain TRS).